Reading from the N-terminus, the 926-residue chain is Alpha-aminoadipic semialdehyde synthase, mitochondrial (926 aa).

The N-terminal 27 residues, 1-27, are a transit peptide targeting the mitochondrion; sequence MLRVSRTKLGRLSPSLSRGLHHKAVMA. The segment at 28–455 is lysine-ketoglutarate reductase; sequence LRREDVNAWE…DAVIASNGML (428 aa). An N6-acetyllysine mark is found at Lys-48 and Lys-56. Residue Lys-93 is modified to N6-acetyllysine; alternate. N6-succinyllysine; alternate is present on Lys-93. The residue at position 128 (Lys-128) is an N6-acetyllysine. Lys-138 bears the N6-acetyllysine; alternate mark. Lys-138 bears the N6-succinyllysine; alternate mark. Lys-274 carries the N6-succinyllysine modification. Position 286 is an N6-acetyllysine; alternate (Lys-286). Lys-286 carries the post-translational modification N6-succinyllysine; alternate. N6-succinyllysine is present on Lys-333. Lys-458 is subject to N6-acetyllysine; alternate. The residue at position 458 (Lys-458) is an N6-succinyllysine; alternate. Residues 477–926 are saccharopine dehydrogenase; that stretch reads MGTKKKVLVL…MYTTQSTIKL (450 aa). Residues Ser-488, Asp-512, and Gln-516 each contribute to the NAD(+) site. N6-acetyllysine; alternate occurs at positions 523 and 535. Residues Lys-523 and Lys-535 each carry the N6-succinyllysine; alternate modification. Positions 554, 576, and 577 each coordinate NAD(+). Residue 577–578 participates in L-saccharopine binding; the sequence is SY. N6-acetyllysine; alternate is present on Lys-584. Position 584 is an N6-succinyllysine; alternate (Lys-584). The NAD(+) site is built by Leu-603, Asp-604, and Pro-605. Asp-604 contacts L-saccharopine. Arg-703 contacts L-saccharopine. Lys-707 is modified (N6-acetyllysine). L-saccharopine is bound at residue 724–726; it reads TLR. Position 732 is an N6-succinyllysine (Lys-732). Position 739 is an N6-acetyllysine (Lys-739). At Lys-761 the chain carries N6-acetyllysine; alternate. Lys-761 bears the N6-succinyllysine; alternate mark. Lys-780 carries the N6-acetyllysine modification.

This sequence in the N-terminal section; belongs to the AlaDH/PNT family. In the C-terminal section; belongs to the saccharopine dehydrogenase family. As to quaternary structure, homotetramer.

Its subcellular location is the mitochondrion. The catalysed reaction is L-saccharopine + NADP(+) + H2O = L-lysine + 2-oxoglutarate + NADPH + H(+). It catalyses the reaction L-saccharopine + NAD(+) + H2O = (S)-2-amino-6-oxohexanoate + L-glutamate + NADH + H(+). It functions in the pathway amino-acid degradation; L-lysine degradation via saccharopine pathway; glutaryl-CoA from L-lysine: step 1/6. The protein operates within amino-acid degradation; L-lysine degradation via saccharopine pathway; glutaryl-CoA from L-lysine: step 2/6. Bifunctional enzyme that catalyzes the first two steps in lysine degradation. The polypeptide is Alpha-aminoadipic semialdehyde synthase, mitochondrial (Bos taurus (Bovine)).